The chain runs to 258 residues: Phosphate import ATP-binding protein PstB 3 (258 aa).

Residues 10–253 (MTARSLAVHY…PANSLTQGYI (244 aa)) enclose the ABC transporter domain. ATP is bound at residue 42–49 (GPSGCGKS).

The protein belongs to the ABC transporter superfamily. Phosphate importer (TC 3.A.1.7) family. In terms of assembly, the complex is composed of two ATP-binding proteins (PstB), two transmembrane proteins (PstC and PstA) and a solute-binding protein (PstS).

It localises to the cell inner membrane. The catalysed reaction is phosphate(out) + ATP + H2O = ADP + 2 phosphate(in) + H(+). Part of the ABC transporter complex PstSACB involved in phosphate import. Responsible for energy coupling to the transport system. The polypeptide is Phosphate import ATP-binding protein PstB 3 (Paramagnetospirillum magneticum (strain ATCC 700264 / AMB-1) (Magnetospirillum magneticum)).